The chain runs to 343 residues: tRNA N6-adenosine threonylcarbamoyltransferase (343 aa).

His120 and His124 together coordinate Fe cation. Substrate contacts are provided by residues 142–146, Asp175, Gly188, Asp192, and Asn281; that span reads VVSGG. Asp310 is a Fe cation binding site.

This sequence belongs to the KAE1 / TsaD family. Fe(2+) is required as a cofactor.

The protein resides in the cytoplasm. It catalyses the reaction L-threonylcarbamoyladenylate + adenosine(37) in tRNA = N(6)-L-threonylcarbamoyladenosine(37) in tRNA + AMP + H(+). Required for the formation of a threonylcarbamoyl group on adenosine at position 37 (t(6)A37) in tRNAs that read codons beginning with adenine. Is involved in the transfer of the threonylcarbamoyl moiety of threonylcarbamoyl-AMP (TC-AMP) to the N6 group of A37, together with TsaE and TsaB. TsaD likely plays a direct catalytic role in this reaction. The chain is tRNA N6-adenosine threonylcarbamoyltransferase from Bacillus thuringiensis subsp. konkukian (strain 97-27).